A 388-amino-acid chain; its full sequence is Succinate--CoA ligase [ADP-forming] subunit beta (388 aa).

The ATP-grasp domain maps to Lys-9–His-244. ATP is bound by residues Lys-46, Gly-53–Gly-55, Glu-99, Ser-102, and Glu-107. Mg(2+) contacts are provided by Asn-199 and Asp-213. Residues Asn-264 and Gly-321–Val-323 each bind substrate.

It belongs to the succinate/malate CoA ligase beta subunit family. Heterotetramer of two alpha and two beta subunits. It depends on Mg(2+) as a cofactor.

The catalysed reaction is succinate + ATP + CoA = succinyl-CoA + ADP + phosphate. It catalyses the reaction GTP + succinate + CoA = succinyl-CoA + GDP + phosphate. It functions in the pathway carbohydrate metabolism; tricarboxylic acid cycle; succinate from succinyl-CoA (ligase route): step 1/1. Its function is as follows. Succinyl-CoA synthetase functions in the citric acid cycle (TCA), coupling the hydrolysis of succinyl-CoA to the synthesis of either ATP or GTP and thus represents the only step of substrate-level phosphorylation in the TCA. The beta subunit provides nucleotide specificity of the enzyme and binds the substrate succinate, while the binding sites for coenzyme A and phosphate are found in the alpha subunit. The sequence is that of Succinate--CoA ligase [ADP-forming] subunit beta from Vibrio cholerae serotype O1 (strain ATCC 39541 / Classical Ogawa 395 / O395).